A 198-amino-acid chain; its full sequence is Recombination protein RecR (198 aa).

The C4-type zinc-finger motif lies at 57 to 72 (CSVCGNLTDEDPCAIC). A Toprim domain is found at 80–175 (STILIVEDSR…KVTRLARGLA (96 aa)).

This sequence belongs to the RecR family.

Functionally, may play a role in DNA repair. It seems to be involved in an RecBC-independent recombinational process of DNA repair. It may act with RecF and RecO. In Streptococcus sanguinis (strain SK36), this protein is Recombination protein RecR.